Reading from the N-terminus, the 206-residue chain is Large ribosomal subunit protein uL4 (206 aa).

The interval 44–87 (NRQGTQSAKTRSEVSGGGRKPWRQKGTGHARQGSTRSPQWTGGG) is disordered.

The protein belongs to the universal ribosomal protein uL4 family. Part of the 50S ribosomal subunit.

In terms of biological role, one of the primary rRNA binding proteins, this protein initially binds near the 5'-end of the 23S rRNA. It is important during the early stages of 50S assembly. It makes multiple contacts with different domains of the 23S rRNA in the assembled 50S subunit and ribosome. Forms part of the polypeptide exit tunnel. The chain is Large ribosomal subunit protein uL4 from Lachnospira eligens (strain ATCC 27750 / DSM 3376 / VPI C15-48 / C15-B4) (Eubacterium eligens).